Reading from the N-terminus, the 476-residue chain is Bifunctional protein HldE (476 aa).

The tract at residues Met-1 to Thr-318 is ribokinase. An ATP-binding site is contributed by Asn-195–Glu-198. The active site involves Asp-264. The interval Met-344 to Gly-476 is cytidylyltransferase.

It in the N-terminal section; belongs to the carbohydrate kinase PfkB family. The protein in the C-terminal section; belongs to the cytidylyltransferase family. In terms of assembly, homodimer.

It carries out the reaction D-glycero-beta-D-manno-heptose 7-phosphate + ATP = D-glycero-beta-D-manno-heptose 1,7-bisphosphate + ADP + H(+). The enzyme catalyses D-glycero-beta-D-manno-heptose 1-phosphate + ATP + H(+) = ADP-D-glycero-beta-D-manno-heptose + diphosphate. The protein operates within nucleotide-sugar biosynthesis; ADP-L-glycero-beta-D-manno-heptose biosynthesis; ADP-L-glycero-beta-D-manno-heptose from D-glycero-beta-D-manno-heptose 7-phosphate: step 1/4. Its pathway is nucleotide-sugar biosynthesis; ADP-L-glycero-beta-D-manno-heptose biosynthesis; ADP-L-glycero-beta-D-manno-heptose from D-glycero-beta-D-manno-heptose 7-phosphate: step 3/4. It participates in bacterial outer membrane biogenesis; LPS core biosynthesis. Functionally, catalyzes the phosphorylation of D-glycero-D-manno-heptose 7-phosphate at the C-1 position to selectively form D-glycero-beta-D-manno-heptose-1,7-bisphosphate. Its function is as follows. Catalyzes the ADP transfer from ATP to D-glycero-beta-D-manno-heptose 1-phosphate, yielding ADP-D-glycero-beta-D-manno-heptose. The polypeptide is Bifunctional protein HldE (Vibrio vulnificus (strain CMCP6)).